The sequence spans 317 residues: Acetyl-coenzyme A carboxylase carboxyl transferase subunit alpha (317 aa).

Positions 33 to 294 (NINKEINCLR…KNRILKDLKE (262 aa)) constitute a CoA carboxyltransferase C-terminal domain.

Belongs to the AccA family. As to quaternary structure, acetyl-CoA carboxylase is a heterohexamer composed of biotin carboxyl carrier protein (AccB), biotin carboxylase (AccC) and two subunits each of ACCase subunit alpha (AccA) and ACCase subunit beta (AccD).

The protein resides in the cytoplasm. The enzyme catalyses N(6)-carboxybiotinyl-L-lysyl-[protein] + acetyl-CoA = N(6)-biotinyl-L-lysyl-[protein] + malonyl-CoA. The protein operates within lipid metabolism; malonyl-CoA biosynthesis; malonyl-CoA from acetyl-CoA: step 1/1. In terms of biological role, component of the acetyl coenzyme A carboxylase (ACC) complex. First, biotin carboxylase catalyzes the carboxylation of biotin on its carrier protein (BCCP) and then the CO(2) group is transferred by the carboxyltransferase to acetyl-CoA to form malonyl-CoA. The protein is Acetyl-coenzyme A carboxylase carboxyl transferase subunit alpha of Wigglesworthia glossinidia brevipalpis.